Reading from the N-terminus, the 137-residue chain is Large ribosomal subunit protein uL16 (137 aa).

Belongs to the universal ribosomal protein uL16 family. In terms of assembly, part of the 50S ribosomal subunit.

Its function is as follows. Binds 23S rRNA and is also seen to make contacts with the A and possibly P site tRNAs. The polypeptide is Large ribosomal subunit protein uL16 (Pseudomonas aeruginosa (strain LESB58)).